Reading from the N-terminus, the 157-residue chain is Protein Smg homolog (157 aa).

Belongs to the Smg family.

This Shewanella halifaxensis (strain HAW-EB4) protein is Protein Smg homolog.